We begin with the raw amino-acid sequence, 346 residues long: Uroporphyrinogen decarboxylase (346 aa).

Substrate is bound by residues 21–25 (RQAGR), Phe-40, Asp-71, Tyr-146, Ser-201, and His-316.

It belongs to the uroporphyrinogen decarboxylase family. In terms of assembly, homodimer.

It localises to the cytoplasm. It carries out the reaction uroporphyrinogen III + 4 H(+) = coproporphyrinogen III + 4 CO2. It participates in porphyrin-containing compound metabolism; protoporphyrin-IX biosynthesis; coproporphyrinogen-III from 5-aminolevulinate: step 4/4. Catalyzes the decarboxylation of four acetate groups of uroporphyrinogen-III to yield coproporphyrinogen-III. The chain is Uroporphyrinogen decarboxylase from Rickettsia conorii (strain ATCC VR-613 / Malish 7).